We begin with the raw amino-acid sequence, 91 residues long: Small ribosomal subunit protein bS16 (91 aa).

Belongs to the bacterial ribosomal protein bS16 family.

In Exiguobacterium sibiricum (strain DSM 17290 / CCUG 55495 / CIP 109462 / JCM 13490 / 255-15), this protein is Small ribosomal subunit protein bS16.